A 212-amino-acid chain; its full sequence is Uracil phosphoribosyltransferase (212 aa).

5-phospho-alpha-D-ribose 1-diphosphate is bound by residues Arg-78, Arg-103, and 130-138; that span reads DPMLATGSS. Uracil-binding positions include Ile-193 and 198 to 200; that span reads GDA. Asp-199 contributes to the 5-phospho-alpha-D-ribose 1-diphosphate binding site.

Belongs to the UPRTase family. It depends on Mg(2+) as a cofactor.

The catalysed reaction is UMP + diphosphate = 5-phospho-alpha-D-ribose 1-diphosphate + uracil. It functions in the pathway pyrimidine metabolism; UMP biosynthesis via salvage pathway; UMP from uracil: step 1/1. Allosterically activated by GTP. Its function is as follows. Catalyzes the conversion of uracil and 5-phospho-alpha-D-ribose 1-diphosphate (PRPP) to UMP and diphosphate. In Pseudomonas savastanoi pv. phaseolicola (strain 1448A / Race 6) (Pseudomonas syringae pv. phaseolicola (strain 1448A / Race 6)), this protein is Uracil phosphoribosyltransferase.